The sequence spans 306 residues: ATP-dependent (S)-NAD(P)H-hydrate dehydratase (306 aa).

One can recognise a YjeF C-terminal domain in the interval L4–L300. (6S)-NADPHX is bound by residues G104 and N157–S163. ATP-binding positions include K197 to D201 and G216 to G225. D226 lines the (6S)-NADPHX pocket.

Belongs to the NnrD/CARKD family. It depends on Mg(2+) as a cofactor.

It carries out the reaction (6S)-NADHX + ATP = ADP + phosphate + NADH + H(+). It catalyses the reaction (6S)-NADPHX + ATP = ADP + phosphate + NADPH + H(+). In terms of biological role, catalyzes the dehydration of the S-form of NAD(P)HX at the expense of ATP, which is converted to ADP. Together with NAD(P)HX epimerase, which catalyzes the epimerization of the S- and R-forms, the enzyme allows the repair of both epimers of NAD(P)HX, a damaged form of NAD(P)H that is a result of enzymatic or heat-dependent hydration. The sequence is that of ATP-dependent (S)-NAD(P)H-hydrate dehydratase from Dictyostelium discoideum (Social amoeba).